Here is a 127-residue protein sequence, read N- to C-terminus: Holo-[acyl-carrier-protein] synthase (127 aa).

Asp8 and Glu56 together coordinate Mg(2+).

It belongs to the P-Pant transferase superfamily. AcpS family. Requires Mg(2+) as cofactor.

It localises to the cytoplasm. It carries out the reaction apo-[ACP] + CoA = holo-[ACP] + adenosine 3',5'-bisphosphate + H(+). Transfers the 4'-phosphopantetheine moiety from coenzyme A to a Ser of acyl-carrier-protein. The protein is Holo-[acyl-carrier-protein] synthase of Caldanaerobacter subterraneus subsp. tengcongensis (strain DSM 15242 / JCM 11007 / NBRC 100824 / MB4) (Thermoanaerobacter tengcongensis).